We begin with the raw amino-acid sequence, 427 residues long: UDP-N-acetyl-D-mannosamine dehydrogenase (427 aa).

Residues Tyr-19, Ile-20, Asp-39, Arg-44, Thr-91, and Thr-130 each coordinate NAD(+). Residues Arg-155, Val-156, Lys-207, Asn-211, Arg-214, His-245, Arg-247, and Gly-258 each coordinate UDP-N-acetyl-alpha-D-mannosaminouronate. Lys-207 functions as the Proton donor/acceptor in the catalytic mechanism. The active-site Nucleophile is Cys-261. Residues Tyr-318 and Lys-319 each coordinate UDP-N-acetyl-alpha-D-mannosaminouronate. An NAD(+)-binding site is contributed by Arg-326. Residue Lys-404 coordinates UDP-N-acetyl-alpha-D-mannosaminouronate.

Belongs to the UDP-glucose/GDP-mannose dehydrogenase family. As to quaternary structure, homotetramer; probably dimer of dimers.

The catalysed reaction is UDP-N-acetyl-alpha-D-mannosamine + 2 NAD(+) + H2O = UDP-N-acetyl-alpha-D-mannosaminouronate + 2 NADH + 3 H(+). In terms of biological role, catalyzes the four-electron oxidation of UDP-N-acetyl-D-mannosamine (UDP-ManNAc), reducing NAD(+) and releasing UDP-N-acetylmannosaminuronic acid (UDP-ManNAcA). The chain is UDP-N-acetyl-D-mannosamine dehydrogenase (wecC) from Methanococcus vannielii (strain ATCC 35089 / DSM 1224 / JCM 13029 / OCM 148 / SB).